Here is a 122-residue protein sequence, read N- to C-terminus: Small ribosomal subunit protein uS13 (122 aa).

Residues 95–122 (GLPVRGQRTHTNARTRKGPAKPIAGKKK) are disordered.

This sequence belongs to the universal ribosomal protein uS13 family. In terms of assembly, part of the 30S ribosomal subunit. Forms a loose heterodimer with protein S19. Forms two bridges to the 50S subunit in the 70S ribosome.

Its function is as follows. Located at the top of the head of the 30S subunit, it contacts several helices of the 16S rRNA. In the 70S ribosome it contacts the 23S rRNA (bridge B1a) and protein L5 of the 50S subunit (bridge B1b), connecting the 2 subunits; these bridges are implicated in subunit movement. Contacts the tRNAs in the A and P-sites. The chain is Small ribosomal subunit protein uS13 from Xanthobacter autotrophicus (strain ATCC BAA-1158 / Py2).